The sequence spans 142 residues: Large ribosomal subunit protein uL11 (142 aa).

It belongs to the universal ribosomal protein uL11 family. As to quaternary structure, part of the ribosomal stalk of the 50S ribosomal subunit. Interacts with L10 and the large rRNA to form the base of the stalk. L10 forms an elongated spine to which L12 dimers bind in a sequential fashion forming a multimeric L10(L12)X complex. In terms of processing, one or more lysine residues are methylated.

Functionally, forms part of the ribosomal stalk which helps the ribosome interact with GTP-bound translation factors. The chain is Large ribosomal subunit protein uL11 from Klebsiella pneumoniae subsp. pneumoniae (strain ATCC 700721 / MGH 78578).